The following is an 892-amino-acid chain: Microsomal triglyceride transfer protein homolog (892 aa).

Positions 1–19 (MFSSRIWLLLAVTVGVCLA) are cleaved as a signal peptide.

As to quaternary structure, heterodimer; heterodimerizes with protein disulfide isomerase.

Its subcellular location is the endoplasmic reticulum. In terms of biological role, catalyzes the transport of cholesteryl ester, and phospholipid between phospholipid surfaces. Does not catalyze transport of triglycerides. Required for the assembly and secretion of plasma lipoproteins that contain apolipoprotein B. Required for normal expression of klf-3. The polypeptide is Microsomal triglyceride transfer protein homolog (Caenorhabditis elegans).